The following is a 475-amino-acid chain: Ribulose bisphosphate carboxylase large chain (475 aa).

A propeptide spanning residues 1-2 is cleaved from the precursor; that stretch reads MS. Residue Pro-3 is modified to N-acetylproline. Lys-14 carries the N6,N6,N6-trimethyllysine modification. Substrate contacts are provided by Asn-123 and Thr-173. Residue Lys-175 is the Proton acceptor of the active site. Substrate is bound at residue Lys-177. The Mg(2+) site is built by Lys-201, Asp-203, and Glu-204. N6-carboxylysine is present on Lys-201. The active-site Proton acceptor is His-294. Substrate-binding residues include Arg-295, His-327, and Ser-379.

Belongs to the RuBisCO large chain family. Type I subfamily. As to quaternary structure, heterohexadecamer of 8 large chains and 8 small chains; disulfide-linked. The disulfide link is formed within the large subunit homodimers. Mg(2+) is required as a cofactor. In terms of processing, the disulfide bond which can form in the large chain dimeric partners within the hexadecamer appears to be associated with oxidative stress and protein turnover.

The protein localises to the plastid. It is found in the chloroplast. The enzyme catalyses 2 (2R)-3-phosphoglycerate + 2 H(+) = D-ribulose 1,5-bisphosphate + CO2 + H2O. It carries out the reaction D-ribulose 1,5-bisphosphate + O2 = 2-phosphoglycolate + (2R)-3-phosphoglycerate + 2 H(+). RuBisCO catalyzes two reactions: the carboxylation of D-ribulose 1,5-bisphosphate, the primary event in carbon dioxide fixation, as well as the oxidative fragmentation of the pentose substrate in the photorespiration process. Both reactions occur simultaneously and in competition at the same active site. The polypeptide is Ribulose bisphosphate carboxylase large chain (Pelargonium hortorum (Common geranium)).